A 907-amino-acid polypeptide reads, in one-letter code: Protein translocase subunit SecA (907 aa).

Residues glutamine 87, 105–109 (GEGKT), and aspartate 512 each bind ATP. Residues 870-897 (AALAATQPQVREGEKVGRNDPCPCGSGK) form a disordered region. 4 residues coordinate Zn(2+): cysteine 891, cysteine 893, cysteine 902, and histidine 903.

Belongs to the SecA family. In terms of assembly, monomer and homodimer. Part of the essential Sec protein translocation apparatus which comprises SecA, SecYEG and auxiliary proteins SecDF-YajC and YidC. The cofactor is Zn(2+).

It is found in the cell inner membrane. It localises to the cytoplasm. It carries out the reaction ATP + H2O + cellular proteinSide 1 = ADP + phosphate + cellular proteinSide 2.. In terms of biological role, part of the Sec protein translocase complex. Interacts with the SecYEG preprotein conducting channel. Has a central role in coupling the hydrolysis of ATP to the transfer of proteins into and across the cell membrane, serving both as a receptor for the preprotein-SecB complex and as an ATP-driven molecular motor driving the stepwise translocation of polypeptide chains across the membrane. This Shewanella piezotolerans (strain WP3 / JCM 13877) protein is Protein translocase subunit SecA.